The chain runs to 644 residues: Acetyl-coenzyme A synthetase (644 aa).

CoA is bound by residues 189–192 (RGGK) and threonine 307. ATP-binding positions include 383–385 (GEP), 407–412 (DTWWQT), aspartate 496, and arginine 511. Position 519 (serine 519) interacts with CoA. Residue arginine 522 coordinates ATP. Valine 533, histidine 535, and valine 538 together coordinate Mg(2+). Residue arginine 580 participates in CoA binding. Lysine 605 is modified (N6-acetyllysine).

It belongs to the ATP-dependent AMP-binding enzyme family. Mg(2+) serves as cofactor. Acetylated. Deacetylation by the SIR2-homolog deacetylase activates the enzyme.

The catalysed reaction is acetate + ATP + CoA = acetyl-CoA + AMP + diphosphate. Catalyzes the conversion of acetate into acetyl-CoA (AcCoA), an essential intermediate at the junction of anabolic and catabolic pathways. AcsA undergoes a two-step reaction. In the first half reaction, AcsA combines acetate with ATP to form acetyl-adenylate (AcAMP) intermediate. In the second half reaction, it can then transfer the acetyl group from AcAMP to the sulfhydryl group of CoA, forming the product AcCoA. The polypeptide is Acetyl-coenzyme A synthetase (Rubrobacter xylanophilus (strain DSM 9941 / JCM 11954 / NBRC 16129 / PRD-1)).